Reading from the N-terminus, the 396-residue chain is Elongation factor Tu (396 aa).

Positions 10-205 (KSHANIGTIG…AVDEYIPTPE (196 aa)) constitute a tr-type G domain. Positions 19 to 26 (GHVDHGKT) are G1. 19–26 (GHVDHGKT) serves as a coordination point for GTP. T26 is a binding site for Mg(2+). The G2 stretch occupies residues 61-65 (GITIS). Residues 82 to 85 (DCPG) form a G3 region. GTP-binding positions include 82 to 86 (DCPGH) and 137 to 140 (NKCD). The interval 137-140 (NKCD) is G4. The interval 175 to 177 (SAL) is G5. T385 carries the phosphothreonine modification.

The protein belongs to the TRAFAC class translation factor GTPase superfamily. Classic translation factor GTPase family. EF-Tu/EF-1A subfamily. In terms of assembly, monomer. Interacts with BrxC. Phosphorylated on Thr-385 in vitro by PrkC in the presence of poly-L-lysine or myelin basic protein, dephosphorylated by PrpC.

The protein resides in the cytoplasm. The catalysed reaction is GTP + H2O = GDP + phosphate + H(+). GTP hydrolase that promotes the GTP-dependent binding of aminoacyl-tRNA to the A-site of ribosomes during protein biosynthesis. The chain is Elongation factor Tu from Bacillus subtilis (strain 168).